The following is a 552-amino-acid chain: Lysine--tRNA ligase (552 aa).

Positions 72-80 (PSGLPHLGT) match the 'HIGH' region motif. The short motif at 320–324 (KISKS) is the 'KMSKS' region element. Lys-323 contacts ATP.

It belongs to the class-I aminoacyl-tRNA synthetase family.

Its subcellular location is the cytoplasm. The enzyme catalyses tRNA(Lys) + L-lysine + ATP = L-lysyl-tRNA(Lys) + AMP + diphosphate. The sequence is that of Lysine--tRNA ligase from Caulobacter vibrioides (strain ATCC 19089 / CIP 103742 / CB 15) (Caulobacter crescentus).